We begin with the raw amino-acid sequence, 145 residues long: Large ribosomal subunit protein uL11 (145 aa).

It belongs to the universal ribosomal protein uL11 family. In terms of assembly, part of the ribosomal stalk of the 50S ribosomal subunit. Interacts with L10 and the large rRNA to form the base of the stalk. L10 forms an elongated spine to which L12 dimers bind in a sequential fashion forming a multimeric L10(L12)X complex. In terms of processing, one or more lysine residues are methylated.

Forms part of the ribosomal stalk which helps the ribosome interact with GTP-bound translation factors. This chain is Large ribosomal subunit protein uL11, found in Francisella philomiragia subsp. philomiragia (strain ATCC 25017 / CCUG 19701 / FSC 153 / O#319-036).